Here is a 794-residue protein sequence, read N- to C-terminus: MYCNIKWLNRSLIYYGGAMSSMNTNERIVPLLPLRGVLVYPTMVLHLDVGRDKSIQALEQAAMDENIIFLAMQKEMNIDDPKEDDIYSVGTVAKVKQMLKLPNGTLRVLVEGLHRAEVVEFIEEENVVQVSIKTVTEEVEADLEEKALMRTLLEHFEQYIKVSKKVSNETFATVADVEEPGRLADLIASHLPIKTKQKQEILEIISVKERLHTLISIIQDEQELLSLEKKIGQKVKRSMERTQKEYFLREQMKAIQTELGDKEGKGGEVEELREKIEQSGMPEETMKAALKELDRYEKLPASSAESGVIRNYMDWLLALPWTDATEDMIDLAHSEEILNKDHYGLEKVKERVLEYLAVQKLTNSLKGPILCLVGPPGVGKTSLARSIATSLNRNFVRVSLGGVRDESEIRGHRRTYVGAMPGRIIQGMKKAKSVNPVFLLDEIDKMSNDFRGDPSAALLEVLDPEQNHNFSDHYIEEPYDLSKVMFVATANTLSSIPGPLLDRMEIISIAGYTELEKVHIAREHLLPKQLQEHGLRKGNLQVRDEALLEIIRYYTREAGVRTLERQIAKVCRKAAKIIVTAERKRIVVTEKNVVDLLGKHIFRYGQAEKTDQVGMATGLAYTAAGGDTLAIEVSVAPGKGKLILTGKLGDVMKESAQAAFSYIRSRAEELQIDPDFHEKNDIHIHVPEGAVPKDGPSAGITMATALISALTGIPVSKEVGMTGEITLRGRVLPIGGLKEKTLSAHRAGLTKIILPAENEKDLDDIPESVKENLTFVLASHLDEVLEHALVGVKQ.

One can recognise a Lon N-terminal domain in the interval 29–222; that stretch reads VPLLPLRGVL…TLISIIQDEQ (194 aa). 374-381 contributes to the ATP binding site; the sequence is GPPGVGKT. The 182-residue stretch at 610–791 folds into the Lon proteolytic domain; it reads TDQVGMATGL…DEVLEHALVG (182 aa). Active-site residues include Ser-697 and Lys-740.

It belongs to the peptidase S16 family. As to quaternary structure, homohexamer. Organized in a ring with a central cavity.

The protein localises to the cytoplasm. It carries out the reaction Hydrolysis of proteins in presence of ATP.. ATP-dependent serine protease that mediates the selective degradation of mutant and abnormal proteins as well as certain short-lived regulatory proteins. Required for cellular homeostasis and for survival from DNA damage and developmental changes induced by stress. Degrades polypeptides processively to yield small peptide fragments that are 5 to 10 amino acids long. Binds to DNA in a double-stranded, site-specific manner. The polypeptide is Lon protease (Bacillus thuringiensis (strain Al Hakam)).